A 29-amino-acid polypeptide reads, in one-letter code: uncharacterized protein (29 aa).

The protein localises to the plastid. It is found in the chloroplast. This is an uncharacterized protein from Trieres chinensis (Marine centric diatom).